The sequence spans 704 residues: Rabphilin-3A (704 aa).

Polar residues predominate over residues 1 to 12 (MTDTVFSSSSSR). A disordered region spans residues 1 to 52 (MTDTVFSSSSSRWMCPSDRPLQSNDKEQLQTGWSVHPSGQPDRQRKQEELTD). A RabBD domain is found at 44 to 161 (QRKQEELTDE…KRSGAWFFKG (118 aa)). The FYVE-type zinc-finger motif lies at 92 to 149 (GDGVNRCILCGEQLGMLGSACVVCEDCKKNVCTKCGVETSNNRPHPVWLCKICIEQRE). 8 residues coordinate Zn(2+): Cys-98, Cys-101, Cys-115, Cys-118, Cys-123, Cys-126, Cys-141, and Cys-144. The interval 167–398 (LPQPMPIKKN…EEEANSYDSD (232 aa)) is disordered. The segment covering 205 to 214 (TRGDTEDRRG) has biased composition (basic and acidic residues). Omega-N-methylarginine is present on Arg-229. Ser-277 is modified (phosphoserine). Over residues 279–290 (QASRPAPASMQS) the composition is skewed to low complexity. The span at 291 to 310 (PAPPQPGQPGPPGGSRPSPG) shows a compositional bias: pro residues. Low complexity predominate over residues 366 to 380 (QASAAAPQPVVASAR). Residues 385–398 (PEEDEEEANSYDSD) show a composition bias toward acidic residues. Residues 402–524 (TLGALEFSLL…KPNQRKNFNI (123 aa)) form the C2 1 domain. 14 residues coordinate Ca(2+): Met-432, Asp-433, Asp-439, Asp-494, Glu-495, Asp-496, Glu-502, Glu-549, Asp-591, Asp-597, Asp-651, Tyr-652, Asp-653, and Asp-659. One can recognise a C2 2 domain in the interval 560-693 (ERGKILVSLM…NKDKKIERWH (134 aa)). Phosphoserine is present on residues Ser-702 and Ser-703.

As to quaternary structure, interacts with RAB3B, RAB3C, RAB3D, RAB8A, RAB27A and RAB27B. Interacts with RAB3A; this interaction recruits RPH3A to synaptic vesicules. Interacts (via C2B domain) with SNAP25. Interacts with deubiquitinating enzyme CAND1; this interaction results in the deubiquitination of RPH3A. Interacts with GRIN2A and DLG4; this ternary complex regulates NMDA receptor composition at postsynaptic membranes. Interacts with SNCA. Ca(2+) is required as a cofactor. Ubiquitinated. Deubiquitinated by CAND1 to prevent its degradation. In terms of tissue distribution, specifically expressed in brain.

It localises to the cytoplasmic vesicle. The protein localises to the secretory vesicle. The protein resides in the synaptic vesicle membrane. It is found in the cell projection. Its subcellular location is the dendritic spine. It localises to the postsynaptic cell membrane. The protein localises to the membrane. Plays an essential role in docking and fusion steps of regulated exocytosis. At the presynaptic level, RPH3A is recruited by RAB3A to the synaptic vesicle membrane in a GTP-dependent manner where it modulates synaptic vesicle trafficking and calcium-triggered neurotransmitter release. In the post-synaptic compartment, forms a ternary complex with GRIN2A and DLG4 and regulates NMDA receptor stability. Also plays a role in the exocytosis of arginine vasopressin hormone. This chain is Rabphilin-3A (RPH3A), found in Bos taurus (Bovine).